Consider the following 111-residue polypeptide: Irditoxin subunit B (111 aa).

The N-terminal stretch at 1–19 is a signal peptide; that stretch reads MKTLLLAVAVVAFVCLGSA. A propeptide spanning residues 20–34 is cleaved from the precursor; that stretch reads DQLGLGRQQIDWGKG. Q35 is subject to Pyrrolidone carboxylic acid. 5 cysteine pairs are disulfide-bonded: C44–C68, C47–C55, C61–C87, C91–C102, and C103–C108.

Belongs to the three-finger toxin family. Ancestral subfamily. Boigatoxin sub-subfamily. Heterodimer of A and B chains; disulfide-linked. In terms of tissue distribution, expressed by the venom gland.

The protein resides in the secreted. Its function is as follows. This bird and reptile-specific postsynaptic neurotoxin inhibits the chick muscle alpha-1-beta-1-gamma-delta (CHRNA1-CHRNB1-CHRNG-CHRND) nicotinic acetylcholine receptor (nAChR) 100-fold more compared with the mouse receptor. In vivo, produces rapid flaccid paralysis, dyspnea and increased respiratory rate in geckos. At sublethal doses geckos were immobilized for up to three days and then recovered. Chicks injected with lethal doses showed rapid onset of inactivity, dyspnea and neck droop, and no extended paralysis with survival was seen. In Boiga irregularis (Brown tree snake), this protein is Irditoxin subunit B.